Reading from the N-terminus, the 117-residue chain is V-type sodium ATPase subunit F (117 aa).

The tract at residues 1-20 is disordered; it reads MARILTRIKEAEENNQKKEE. Positions 7–20 are enriched in basic and acidic residues; that stretch reads RIKEAEENNQKKEE.

Belongs to the V-ATPase G subunit family.

Involved in ATP-driven sodium extrusion. This chain is V-type sodium ATPase subunit F (ntpF), found in Enterococcus hirae (strain ATCC 9790 / DSM 20160 / JCM 8729 / LMG 6399 / NBRC 3181 / NCIMB 6459 / NCDO 1258 / NCTC 12367 / WDCM 00089 / R).